Reading from the N-terminus, the 1066-residue chain is Beta-galactosidase (1066 aa).

N110 and D209 together coordinate substrate. D209 lines the Na(+) pocket. Residues E432, H434, and E477 each coordinate Mg(2+). Substrate-binding positions include E477 and 553-556 (EYAH). The active-site Proton donor is E477. E553 (nucleophile) is an active-site residue. N613 is a Mg(2+) binding site. Positions 617 and 620 each coordinate Na(+). The substrate site is built by N620 and W1041.

It belongs to the glycosyl hydrolase 2 family. As to quaternary structure, homotetramer. It depends on Mg(2+) as a cofactor. Na(+) is required as a cofactor.

It carries out the reaction Hydrolysis of terminal non-reducing beta-D-galactose residues in beta-D-galactosides.. The sequence is that of Beta-galactosidase from Yersinia pseudotuberculosis serotype O:1b (strain IP 31758).